The primary structure comprises 92 residues: Large ribosomal subunit protein eL43 (92 aa).

Residues Cys-39, Cys-42, Cys-57, and Cys-60 each contribute to the Zn(2+) site. The C4-type zinc-finger motif lies at 39-60 (CSFCGKTKMKRRAVGIWHCGSC).

This sequence belongs to the eukaryotic ribosomal protein eL43 family. Component of the large ribosomal subunit.

Its subcellular location is the cytoplasm. Component of the large ribosomal subunit. The ribosome is a large ribonucleoprotein complex responsible for the synthesis of proteins in the cell. This Mus musculus (Mouse) protein is Large ribosomal subunit protein eL43 (Rpl37a).